The chain runs to 210 residues: Neuroendocrine protein 7B2 (210 aa).

A signal peptide spans 1-24 (MTSRMAILSGLLFWLLLEWNPAFA). Cysteine 118 and cysteine 128 are oxidised to a cystine. Phosphoserine is present on residues serine 139 and serine 203.

The protein belongs to the 7B2 family. In terms of assembly, interacts with PCSK2/PC2 early in the secretory pathway. Dissociation occurs at later stages. Post-translationally, proteolytically cleaved in the Golgi by a furin-like convertase to generate bioactive peptides. Sulfated on tyrosine residues.

It is found in the secreted. In terms of biological role, acts as a molecular chaperone for PCSK2/PC2, preventing its premature activation in the regulated secretory pathway. Binds to inactive PCSK2 in the endoplasmic reticulum and facilitates its transport from there to later compartments of the secretory pathway where it is proteolytically matured and activated. Also required for cleavage of PCSK2 but does not appear to be involved in its folding. Plays a role in regulating pituitary hormone secretion. The C-terminal peptide inhibits PCSK2 in vitro. This chain is Neuroendocrine protein 7B2 (Scg5), found in Rattus norvegicus (Rat).